A 165-amino-acid chain; its full sequence is Lipoprotein signal peptidase (165 aa).

Helical transmembrane passes span 66-86 and 91-111; these read WQFW…LSLT and NEPV…GNLV. Catalysis depends on residues D121 and D139. Residues 132 to 152 traverse the membrane as a helical segment; it reads WPAFNVADIAICIGAFLAFVA.

The protein belongs to the peptidase A8 family.

Its subcellular location is the cell inner membrane. The catalysed reaction is Release of signal peptides from bacterial membrane prolipoproteins. Hydrolyzes -Xaa-Yaa-Zaa-|-(S,diacylglyceryl)Cys-, in which Xaa is hydrophobic (preferably Leu), and Yaa (Ala or Ser) and Zaa (Gly or Ala) have small, neutral side chains.. It participates in protein modification; lipoprotein biosynthesis (signal peptide cleavage). Its function is as follows. This protein specifically catalyzes the removal of signal peptides from prolipoproteins. The sequence is that of Lipoprotein signal peptidase from Nitratidesulfovibrio vulgaris (strain DP4) (Desulfovibrio vulgaris).